The sequence spans 342 residues: S-adenosylmethionine:tRNA ribosyltransferase-isomerase (342 aa).

It belongs to the QueA family. Monomer.

It is found in the cytoplasm. It carries out the reaction 7-aminomethyl-7-carbaguanosine(34) in tRNA + S-adenosyl-L-methionine = epoxyqueuosine(34) in tRNA + adenine + L-methionine + 2 H(+). It participates in tRNA modification; tRNA-queuosine biosynthesis. Transfers and isomerizes the ribose moiety from AdoMet to the 7-aminomethyl group of 7-deazaguanine (preQ1-tRNA) to give epoxyqueuosine (oQ-tRNA). This Campylobacter jejuni subsp. jejuni serotype O:2 (strain ATCC 700819 / NCTC 11168) protein is S-adenosylmethionine:tRNA ribosyltransferase-isomerase.